The chain runs to 148 residues: Protein ORM1 (148 aa).

4 helical membrane passes run 12-32 (WIIH…FPGV), 36-56 (WSWT…FHLI), 89-109 (FLII…HYDL), and 111-131 (MFSW…LPVT).

It to yeast YLR350W C-terminus.

The protein resides in the membrane. The chain is Protein ORM1 (ORM1) from Saccharomyces pastorianus (strain ATCC 76670 / Carlsberg bottom yeast no.2 / CBS 1503 / CLIB 180 / NBRC 10610 / NRRL Y-1525) (Saaz-type lager yeast).